The chain runs to 538 residues: Nectin-2 (538 aa).

A signal peptide spans 1-31 (MARAAALLPSRSPPTPLLWPLLLLLLLETGA). One can recognise an Ig-like V-type domain in the interval 32–156 (QDVRVQVLPE…KGSVRGMTWL (125 aa)). The Extracellular portion of the chain corresponds to 32–360 (QDVRVQVLPE…NTAGAGATGG (329 aa)). 3 disulfide bridges follow: Cys54-Cys140, Cys183-Cys238, and Cys283-Cys329. An N-linked (GlcNAc...) asparagine glycan is attached at Asn137. Ig-like C2-type domains follow at residues 162–256 (PKNQ…VTLS) and 261–345 (PEVS…QVIF). Asn324 is a glycosylation site (N-linked (GlcNAc...) asparagine). A helical transmembrane segment spans residues 361 to 381 (IIGGIIAAIIATAVAATGILI). The Cytoplasmic segment spans residues 382 to 538 (CRQQRKEQTL…GFVMSRAMYV (157 aa)). The segment at 390–414 (TLQGAEEDEDLEGPPSYKPPTPKAK) is disordered. Thr410 bears the Phosphothreonine mark. Phosphoserine is present on residues Ser433, Gly465, and Gly470. A disordered region spans residues 462 to 489 (ERSGPLHPGATSLGSPIPVPPGPPAVED).

Belongs to the nectin family. Can form trans-heterodimers with NECTIN3. Interacts with CD226 or with PVRIG; these interactions are competitive and have a differential functional outcome on T-cell activation, either positive or negative, respectively. Binds with low affinity to TIGIT. In terms of assembly, (Microbial infection) Interacts with herpes simplex virus 1 (HHV-1) mutant Rid1, herpes simplex virus 1 (HHV-2) and pseudorabies virus (PRV) envelope glycoprotein D. In terms of tissue distribution, ubiquitous.

The protein resides in the cell membrane. Functionally, modulator of T-cell signaling. Can be either a costimulator of T-cell function, or a coinhibitor, depending on the receptor it binds to. Upon binding to CD226, stimulates T-cell proliferation and cytokine production, including that of IL2, IL5, IL10, IL13, and IFNG. Upon interaction with PVRIG, inhibits T-cell proliferation. These interactions are competitive. Probable cell adhesion protein. In terms of biological role, (Microbial infection) Acts as a receptor for herpes simplex virus 1 (HHV-1) mutant Rid1, herpes simplex virus 1 (HHV-2) and pseudorabies virus (PRV). This chain is Nectin-2, found in Homo sapiens (Human).